The following is a 239-amino-acid chain: Phosphoribosylaminoimidazole-succinocarboxamide synthase (239 aa).

It belongs to the SAICAR synthetase family.

The catalysed reaction is 5-amino-1-(5-phospho-D-ribosyl)imidazole-4-carboxylate + L-aspartate + ATP = (2S)-2-[5-amino-1-(5-phospho-beta-D-ribosyl)imidazole-4-carboxamido]succinate + ADP + phosphate + 2 H(+). The protein operates within purine metabolism; IMP biosynthesis via de novo pathway; 5-amino-1-(5-phospho-D-ribosyl)imidazole-4-carboxamide from 5-amino-1-(5-phospho-D-ribosyl)imidazole-4-carboxylate: step 1/2. The chain is Phosphoribosylaminoimidazole-succinocarboxamide synthase from Acinetobacter baumannii (strain AB307-0294).